We begin with the raw amino-acid sequence, 485 residues long: Glutamate--tRNA ligase (485 aa).

The 'HIGH' region motif lies at 11-21 (PSPTGHLHIGN). A 'KMSKS' region motif is present at residues 252–256 (KLSKR). Residue lysine 255 coordinates ATP.

The protein belongs to the class-I aminoacyl-tRNA synthetase family. Glutamate--tRNA ligase type 1 subfamily. As to quaternary structure, monomer.

The protein resides in the cytoplasm. It catalyses the reaction tRNA(Glu) + L-glutamate + ATP = L-glutamyl-tRNA(Glu) + AMP + diphosphate. Functionally, catalyzes the attachment of glutamate to tRNA(Glu) in a two-step reaction: glutamate is first activated by ATP to form Glu-AMP and then transferred to the acceptor end of tRNA(Glu). This is Glutamate--tRNA ligase from Bacillus licheniformis (strain ATCC 14580 / DSM 13 / JCM 2505 / CCUG 7422 / NBRC 12200 / NCIMB 9375 / NCTC 10341 / NRRL NRS-1264 / Gibson 46).